Consider the following 227-residue polypeptide: uncharacterized protein (227 aa).

Transmembrane regions (helical) follow at residues 113-133 and 141-161; these read IMLI…FIVF and FGIC…NGLI.

It is found in the membrane. This is an uncharacterized protein from Dictyostelium discoideum (Social amoeba).